The primary structure comprises 310 residues: tRNA uridine(34) hydroxylase (310 aa).

One can recognise a Rhodanese domain in the interval 127-225 (KDKNTIVVDT…YLEDMSKEES (99 aa)). The Cysteine persulfide intermediate role is filled by Cys185.

Belongs to the TrhO family.

It catalyses the reaction uridine(34) in tRNA + AH2 + O2 = 5-hydroxyuridine(34) in tRNA + A + H2O. In terms of biological role, catalyzes oxygen-dependent 5-hydroxyuridine (ho5U) modification at position 34 in tRNAs. In Prochlorococcus marinus subsp. pastoris (strain CCMP1986 / NIES-2087 / MED4), this protein is tRNA uridine(34) hydroxylase.